Consider the following 238-residue polypeptide: Type III pantothenate kinase (238 aa).

7–14 (DAGNSGLK) is an ATP binding site. Substrate-binding positions include Y88 and 95-98 (GVDR). D97 functions as the Proton acceptor in the catalytic mechanism. A K(+)-binding site is contributed by D117. ATP is bound at residue T120. T172 provides a ligand contact to substrate.

It belongs to the type III pantothenate kinase family. As to quaternary structure, homodimer. Requires NH4(+) as cofactor. K(+) serves as cofactor.

It is found in the cytoplasm. It carries out the reaction (R)-pantothenate + ATP = (R)-4'-phosphopantothenate + ADP + H(+). It functions in the pathway cofactor biosynthesis; coenzyme A biosynthesis; CoA from (R)-pantothenate: step 1/5. Functionally, catalyzes the phosphorylation of pantothenate (Pan), the first step in CoA biosynthesis. This Hahella chejuensis (strain KCTC 2396) protein is Type III pantothenate kinase.